Consider the following 628-residue polypeptide: tRNA (guanine(37)-N(1))-methyltransferase (628 aa).

Residues histidine 265, 303 to 304 (DL), 342 to 343 (DG), and asparagine 445 contribute to the S-adenosyl-L-methionine site.

It belongs to the class I-like SAM-binding methyltransferase superfamily. TRM5/TYW2 family. As to quaternary structure, monomer.

Its subcellular location is the mitochondrion matrix. It is found in the nucleus. The protein resides in the cytoplasm. It catalyses the reaction guanosine(37) in tRNA + S-adenosyl-L-methionine = N(1)-methylguanosine(37) in tRNA + S-adenosyl-L-homocysteine + H(+). Functionally, specifically methylates the N1 position of guanosine-37 in various cytoplasmic and mitochondrial tRNAs. Methylation is not dependent on the nature of the nucleoside 5' of the target nucleoside. This is the first step in the biosynthesis of wybutosine (yW), a modified base adjacent to the anticodon of tRNAs and required for accurate decoding. This chain is tRNA (guanine(37)-N(1))-methyltransferase, found in Mycosarcoma maydis (Corn smut fungus).